The sequence spans 1456 residues: ABC-type transporter eriD (1456 aa).

The interval 1–65 (MAENEKVTYG…DPRMDPLSGK (65 aa)) is disordered. The span at 30-40 (SMTNASRSSVY) shows a compositional bias: polar residues. In terms of domain architecture, ABC transporter 1 spans 118–372 (LDIPGLARDI…FIDMGFECPP (255 aa)). 6 consecutive transmembrane segments (helical) span residues 481–501 (NFLT…SIFY), 515–535 (ALLF…ILQI), 561–581 (VLCD…VLYF), 590–610 (GAFF…SMIF), 623–643 (AMAP…FTIP), and 734–754 (ILFG…EFIA). A disordered region spans residues 775 to 799 (EGASEDEEAGTGSTGTRTQEEPVDK). The region spanning 813-1056 (FHWEDVIYDI…IIDYFEGQGA (244 aa)) is the ABC transporter 2 domain. 849–856 (GASGAGKT) contacts ATP. A run of 7 helical transmembrane segments spans residues 1148 to 1168 (YIYS…FSFF), 1184 to 1204 (VFMG…HFVT), 1233 to 1253 (LPWN…PVGM), 1269 to 1289 (LMFL…HMLI), 1301 to 1321 (IASL…GPSG), 1337 to 1357 (PFTY…PAFC), and 1423 to 1443 (FGFL…FYWL).

This sequence belongs to the ABC transporter superfamily. ABCG family. PDR (TC 3.A.1.205) subfamily.

The protein resides in the membrane. ABC-type transporter; part of the gene cluster that mediates the biosynthesis of erinacines, cyathane-xylosides that show unique biological activities, including leishmanicidal activity, stimulating activity for nerve growth-factor synthesis, and agonistic activity toward the kappa opioid receptor. The sequence is that of ABC-type transporter eriD from Hericium erinaceus (Lion's mane mushroom).